The chain runs to 505 residues: Lysine--tRNA ligase 1 (505 aa).

The Mg(2+) site is built by aspartate 415 and glutamate 422.

It belongs to the class-II aminoacyl-tRNA synthetase family. In terms of assembly, homodimer. It depends on Mg(2+) as a cofactor.

Its subcellular location is the cytoplasm. The catalysed reaction is tRNA(Lys) + L-lysine + ATP = L-lysyl-tRNA(Lys) + AMP + diphosphate. In Mycobacterium bovis (strain ATCC BAA-935 / AF2122/97), this protein is Lysine--tRNA ligase 1 (lysS1).